Here is a 160-residue protein sequence, read N- to C-terminus: Secreted RxLR effector protein RXLR-C11 (160 aa).

The first 19 residues, 1-19, serve as a signal peptide directing secretion; the sequence is MHFSLVLLVFAAIVIPICA. Residues 58–75 carry the RxLR-dEER motif; that stretch reads RLLRMNDKAVISDHEEER.

It belongs to the RxLR effector family.

It localises to the secreted. The protein resides in the host cell membrane. It is found in the host nucleus. Secreted effector that suppresses pattern-triggered immunity (PTI) in plant host. The chain is Secreted RxLR effector protein RXLR-C11 from Plasmopara halstedii (Downy mildew of sunflower).